Here is a 375-residue protein sequence, read N- to C-terminus: ATP-dependent kinase YFH7 (375 aa).

66 to 74 (GPPGSGKST) contributes to the ATP binding site.

This sequence belongs to the YFH7 family.

Functionally, ATP-dependent kinase that could be involved in endoplasmic reticulum membrane assembly. This Zygosaccharomyces rouxii (strain ATCC 2623 / CBS 732 / NBRC 1130 / NCYC 568 / NRRL Y-229) protein is ATP-dependent kinase YFH7 (YFH7).